We begin with the raw amino-acid sequence, 286 residues long: D-tagatose-1,6-bisphosphate aldolase subunit KbaY (286 aa).

Asp82 serves as the catalytic Proton donor. His83 and His180 together coordinate Zn(2+). Gly181 is a dihydroxyacetone phosphate binding site. His208 is a Zn(2+) binding site. Dihydroxyacetone phosphate-binding positions include 209–211 (GAS) and 230–233 (NVAT).

It belongs to the class II fructose-bisphosphate aldolase family. TagBP aldolase KbaY subfamily. Homotetramer. Forms a complex with KbaZ. It depends on Zn(2+) as a cofactor.

The enzyme catalyses D-tagatofuranose 1,6-bisphosphate = D-glyceraldehyde 3-phosphate + dihydroxyacetone phosphate. The protein operates within carbohydrate metabolism; D-tagatose 6-phosphate degradation; D-glyceraldehyde 3-phosphate and glycerone phosphate from D-tagatose 6-phosphate: step 2/2. Functionally, catalytic subunit of the tagatose-1,6-bisphosphate aldolase KbaYZ, which catalyzes the reversible aldol condensation of dihydroxyacetone phosphate (DHAP or glycerone-phosphate) with glyceraldehyde 3-phosphate (G3P) to produce tagatose 1,6-bisphosphate (TBP). Requires KbaZ subunit for full activity and stability. Is involved in the catabolism of N-acetylgalactosamine and D-galactosamine. This chain is D-tagatose-1,6-bisphosphate aldolase subunit KbaY (kbaY), found in Escherichia coli.